A 197-amino-acid chain; its full sequence is dITP/XTP pyrophosphatase (197 aa).

10-15 contributes to the substrate binding site; sequence SHNGGK. Mg(2+) is bound by residues Glu41 and Asp70. Asp70 functions as the Proton acceptor in the catalytic mechanism. Residues Ser71, 154-157, Lys177, and 182-183 contribute to the substrate site; these read FGYD and HR.

The protein belongs to the HAM1 NTPase family. In terms of assembly, homodimer. Mg(2+) serves as cofactor.

It carries out the reaction XTP + H2O = XMP + diphosphate + H(+). It catalyses the reaction dITP + H2O = dIMP + diphosphate + H(+). The enzyme catalyses ITP + H2O = IMP + diphosphate + H(+). Functionally, pyrophosphatase that catalyzes the hydrolysis of nucleoside triphosphates to their monophosphate derivatives, with a high preference for the non-canonical purine nucleotides XTP (xanthosine triphosphate), dITP (deoxyinosine triphosphate) and ITP. Seems to function as a house-cleaning enzyme that removes non-canonical purine nucleotides from the nucleotide pool, thus preventing their incorporation into DNA/RNA and avoiding chromosomal lesions. In Pseudomonas syringae pv. tomato (strain ATCC BAA-871 / DC3000), this protein is dITP/XTP pyrophosphatase.